Consider the following 326-residue polypeptide: Putative HTH-type transcriptional regulatory protein MmarC7_1702 (326 aa).

The HTH cro/C1-type domain maps to 128–183 (LRETREKLKISVGELAEISRVSRKTIYKYEQNEANPSAEVAIKIEEYLDVPLIKGI). The segment at residues 139 to 158 (VGELAEISRVSRKTIYKYEQ) is a DNA-binding region (H-T-H motif).

The chain is Putative HTH-type transcriptional regulatory protein MmarC7_1702 from Methanococcus maripaludis (strain C7 / ATCC BAA-1331).